The chain runs to 97 residues: Aspartyl/glutamyl-tRNA(Asn/Gln) amidotransferase subunit C (97 aa).

The disordered stretch occupies residues 58–78; the sequence is LPQGRLRKDTPRDPLDRENAL. Residues 63–77 show a composition bias toward basic and acidic residues; sequence LRKDTPRDPLDRENA.

The protein belongs to the GatC family. In terms of assembly, heterotrimer of A, B and C subunits.

It catalyses the reaction L-glutamyl-tRNA(Gln) + L-glutamine + ATP + H2O = L-glutaminyl-tRNA(Gln) + L-glutamate + ADP + phosphate + H(+). It carries out the reaction L-aspartyl-tRNA(Asn) + L-glutamine + ATP + H2O = L-asparaginyl-tRNA(Asn) + L-glutamate + ADP + phosphate + 2 H(+). Its function is as follows. Allows the formation of correctly charged Asn-tRNA(Asn) or Gln-tRNA(Gln) through the transamidation of misacylated Asp-tRNA(Asn) or Glu-tRNA(Gln) in organisms which lack either or both of asparaginyl-tRNA or glutaminyl-tRNA synthetases. The reaction takes place in the presence of glutamine and ATP through an activated phospho-Asp-tRNA(Asn) or phospho-Glu-tRNA(Gln). This chain is Aspartyl/glutamyl-tRNA(Asn/Gln) amidotransferase subunit C, found in Saccharolobus islandicus (strain Y.N.15.51 / Yellowstone #2) (Sulfolobus islandicus).